A 72-amino-acid chain; its full sequence is DNA-directed RNA polymerase subunit epsilon (72 aa).

It belongs to the RNA polymerase subunit epsilon family. RNAP is composed of a core of 2 alpha, a beta and a beta' subunit. The core is associated with a delta subunit, and at least one of epsilon or omega. When a sigma factor is associated with the core the holoenzyme is formed, which can initiate transcription.

It carries out the reaction RNA(n) + a ribonucleoside 5'-triphosphate = RNA(n+1) + diphosphate. Its function is as follows. A non-essential component of RNA polymerase (RNAP). The polypeptide is DNA-directed RNA polymerase subunit epsilon (Lactiplantibacillus plantarum (strain ATCC BAA-793 / NCIMB 8826 / WCFS1) (Lactobacillus plantarum)).